The sequence spans 319 residues: Thioredoxin reductase (319 aa).

37–44 (ERGVPGGQ) provides a ligand contact to FAD. Residues C136 and C139 are joined by a disulfide bond. 279-288 (DVRAKSLRQI) contacts FAD.

The protein belongs to the class-II pyridine nucleotide-disulfide oxidoreductase family. Homodimer. FAD is required as a cofactor.

The protein resides in the cytoplasm. The catalysed reaction is [thioredoxin]-dithiol + NADP(+) = [thioredoxin]-disulfide + NADPH + H(+). In Listeria monocytogenes serovar 1/2a (strain ATCC BAA-679 / EGD-e), this protein is Thioredoxin reductase (trxB).